A 422-amino-acid polypeptide reads, in one-letter code: Adenylosuccinate synthetase (422 aa).

GTP is bound by residues 11–17 and 39–41; these read GDEGKGK and GHT. Aspartate 12 serves as the catalytic Proton acceptor. Positions 12 and 39 each coordinate Mg(2+). Residues 12–15, 37–40, threonine 129, arginine 143, asparagine 219, threonine 234, and arginine 298 contribute to the IMP site; these read DEGK and NAGH. Catalysis depends on histidine 40, which acts as the Proton donor. Residue 294-300 participates in substrate binding; it reads VTTGRKR. Residues arginine 300, 326–328, and 411–413 each bind GTP; these read KLD and GTG.

The protein belongs to the adenylosuccinate synthetase family. Homodimer. It depends on Mg(2+) as a cofactor.

It localises to the cytoplasm. It carries out the reaction IMP + L-aspartate + GTP = N(6)-(1,2-dicarboxyethyl)-AMP + GDP + phosphate + 2 H(+). The protein operates within purine metabolism; AMP biosynthesis via de novo pathway; AMP from IMP: step 1/2. Functionally, plays an important role in the de novo pathway and in the salvage pathway of purine nucleotide biosynthesis. Catalyzes the first committed step in the biosynthesis of AMP from IMP. This Talaromyces stipitatus (strain ATCC 10500 / CBS 375.48 / QM 6759 / NRRL 1006) (Penicillium stipitatum) protein is Adenylosuccinate synthetase.